The sequence spans 416 residues: Serine hydroxymethyltransferase (416 aa).

(6S)-5,6,7,8-tetrahydrofolate contacts are provided by residues Leu-121 and 125 to 127; that span reads GHL. Lys-229 is subject to N6-(pyridoxal phosphate)lysine.

This sequence belongs to the SHMT family. In terms of assembly, homodimer. Pyridoxal 5'-phosphate is required as a cofactor.

It is found in the cytoplasm. It catalyses the reaction (6R)-5,10-methylene-5,6,7,8-tetrahydrofolate + glycine + H2O = (6S)-5,6,7,8-tetrahydrofolate + L-serine. It functions in the pathway one-carbon metabolism; tetrahydrofolate interconversion. The protein operates within amino-acid biosynthesis; glycine biosynthesis; glycine from L-serine: step 1/1. In terms of biological role, catalyzes the reversible interconversion of serine and glycine with tetrahydrofolate (THF) serving as the one-carbon carrier. This reaction serves as the major source of one-carbon groups required for the biosynthesis of purines, thymidylate, methionine, and other important biomolecules. Also exhibits THF-independent aldolase activity toward beta-hydroxyamino acids, producing glycine and aldehydes, via a retro-aldol mechanism. The chain is Serine hydroxymethyltransferase from Neisseria gonorrhoeae.